The primary structure comprises 1086 residues: Ribonuclease 3 (1086 aa).

Disordered regions lie at residues 1 to 77 and 158 to 233; these read MSDE…DSPR and CHSM…LRNF. A compositionally biased stretch (basic residues) spans 13–23; the sequence is PKHKRARRKKY. A compositionally biased stretch (basic and acidic residues) spans 24–35; the sequence is QKEYQERHKEEM. Over residues 43 to 53 the composition is skewed to polar residues; sequence FQNQPSTSSAP. A compositionally biased stretch (basic residues) spans 159-168; it reads HSMKGRKTPK. Positions 181-190 are enriched in acidic residues; the sequence is VSDDSNDSQD. Polar residues predominate over residues 191–201; the sequence is EASTSEPTNRQ. The span at 203 to 217 shows a compositional bias: basic and acidic residues; it reads PEADKTGEVKDEKQT. 2 consecutive RNase III domains span residues 607–781 and 833–957; these read LDVF…LDGG and FHAL…VDRG. Mg(2+)-binding residues include glutamate 694, asparagine 767, glutamate 770, glutamate 873, aspartate 943, and glutamate 946. Residues 984–1059 form the DRBM domain; it reads DAKSHLQQWC…AELALANLES (76 aa).

This sequence belongs to the ribonuclease III family. The cofactor is Mg(2+). Mn(2+) is required as a cofactor.

Its subcellular location is the nucleus. The catalysed reaction is Endonucleolytic cleavage to 5'-phosphomonoester.. Its function is as follows. Executes the initial step of microRNA (miRNA) processing in the nucleus, that is the cleavage of pri-miRNA to release pre-miRNA. Involved in pre-rRNA processing. Cleaves double-strand RNA and does not cleave single-strand RNA. Involved in fertility. Required for the function or synthesis of the let-7 miRNA. This Caenorhabditis elegans protein is Ribonuclease 3 (drsh-1).